A 466-amino-acid chain; its full sequence is Glutamate decarboxylase beta (466 aa).

2 residues coordinate substrate: Thr-62 and Asn-83. Residues Ser-126 to Ser-127, Thr-212, and His-275 contribute to the pyridoxal 5'-phosphate site. Lys-276 is modified (N6-(pyridoxal phosphate)lysine). An N6-acetyllysine mark is found at Lys-446, Lys-453, and Lys-464.

The protein belongs to the group II decarboxylase family. In terms of assembly, homohexamer composed of three dimers. Pyridoxal 5'-phosphate serves as cofactor.

It carries out the reaction L-glutamate + H(+) = 4-aminobutanoate + CO2. Converts glutamate to gamma-aminobutyrate (GABA), consuming one intracellular proton in the reaction. The gad system helps to maintain a near-neutral intracellular pH when cells are exposed to extremely acidic conditions. The ability to survive transit through the acidic conditions of the stomach is essential for successful colonization of the mammalian host by commensal and pathogenic bacteria. The sequence is that of Glutamate decarboxylase beta (gadB) from Shigella flexneri.